We begin with the raw amino-acid sequence, 565 residues long: MKATQTLIATTKELPKEAVLISHQYMLKAGLIKKLASGIYTWMPLGLKVLQKIQNIVRDEMNKAGASELLLPSILPSELLQETHRWDKFGPELLKLHDRHNRDFCYGPTHEEPIVDMARDTIKSYKQLPLNLYQIQTKFRDEIRPRFGVMRAREFIMKDAYSFHENSQCLRNTYNTMYATYCNILDKIGLAYRPVKADTGAIGGDNSHEFQVLANAGEDIICYSNGSDYAANIELATYAKPDLSKRVNSQNTIEKIHTPNIKTIEKLCKEMSFDIKKTIKTMVIKDAGGNFFALVIRGDHELNETKINKLDQIIAPYTLATKEEIFSIFNANPGSLGIYNCPISIIADYSAIAITDLVCGANEDDYHFTNVNWDRDVTNYQIADIRNVVTGDISPDGKGTLELTNGIEVGHIFELEDVYSKPMNANIIGQDGKSKPMLMGCYGFGVSRVMAAAIEQSHDENGIIWPESIAPYQVAILPINYNKSDKIKEVADKLYQDLLGDGIDVLLDDRGARPGVMFADADLIGYSHHVVIGDRLLEQGLIEYKNRKTQEKQEITIAELIKILK.

It belongs to the class-II aminoacyl-tRNA synthetase family. ProS type 1 subfamily. Homodimer.

The protein localises to the cytoplasm. The catalysed reaction is tRNA(Pro) + L-proline + ATP = L-prolyl-tRNA(Pro) + AMP + diphosphate. Functionally, catalyzes the attachment of proline to tRNA(Pro) in a two-step reaction: proline is first activated by ATP to form Pro-AMP and then transferred to the acceptor end of tRNA(Pro). As ProRS can inadvertently accommodate and process non-cognate amino acids such as alanine and cysteine, to avoid such errors it has two additional distinct editing activities against alanine. One activity is designated as 'pretransfer' editing and involves the tRNA(Pro)-independent hydrolysis of activated Ala-AMP. The other activity is designated 'posttransfer' editing and involves deacylation of mischarged Ala-tRNA(Pro). The misacylated Cys-tRNA(Pro) is not edited by ProRS. The protein is Proline--tRNA ligase of Francisella tularensis subsp. tularensis (strain WY96-3418).